The primary structure comprises 240 residues: Uridylate kinase (240 aa).

13–16 contributes to the ATP binding site; it reads KLSG. Residues 21–26 form an involved in allosteric activation by GTP region; sequence GEKGFG. Glycine 55 is a UMP binding site. Residues glycine 56 and arginine 60 each coordinate ATP. Residues aspartate 75 and 136-143 contribute to the UMP site; that span reads IGNPYFST. Residues asparagine 164, tyrosine 170, and aspartate 173 each coordinate ATP.

The protein belongs to the UMP kinase family. Homohexamer.

Its subcellular location is the cytoplasm. The catalysed reaction is UMP + ATP = UDP + ADP. It functions in the pathway pyrimidine metabolism; CTP biosynthesis via de novo pathway; UDP from UMP (UMPK route): step 1/1. Allosterically activated by GTP. Inhibited by UTP. Functionally, catalyzes the reversible phosphorylation of UMP to UDP. This chain is Uridylate kinase, found in Staphylococcus aureus (strain Newman).